Here is a 638-residue protein sequence, read N- to C-terminus: Chaperone protein HtpG (638 aa).

The tract at residues Met-1 to Arg-345 is a; substrate-binding. The segment at Glu-346–Asn-560 is b. Residues Met-561 to Leu-638 form a c region.

This sequence belongs to the heat shock protein 90 family. As to quaternary structure, homodimer.

Its subcellular location is the cytoplasm. Its function is as follows. Molecular chaperone. Has ATPase activity. The chain is Chaperone protein HtpG from Streptomyces coelicolor (strain ATCC BAA-471 / A3(2) / M145).